The following is a 137-amino-acid chain: Flagellar basal body rod protein FlgB (137 aa).

Belongs to the flagella basal body rod proteins family. The basal body constitutes a major portion of the flagellar organelle and consists of a number of rings mounted on a central rod. In Gram-negative bacteria, at least four rings, L, P, S and M are present, whereas Gram-positive bacteria lack the L and P rings. The rod consists of about 26 subunits of FlgG in the distal portion, and FlgB, FlgC and FlgF build up the proximal portion of the rod with about 6 subunits each. Rod assembly occurs by export via the flagellum-specific pathway of its constituent proteins and by their incorporation into the rod structure in the probable order of FlgB, FlgC, FlgF and FlgG. Another protein, FliE, also assembles onto the stable rod structure.

It localises to the bacterial flagellum basal body. Functionally, structural component of flagellum, the bacterial motility apparatus. Part of the rod structure of flagellar basal body. The protein is Flagellar basal body rod protein FlgB of Proteus mirabilis (strain HI4320).